The chain runs to 216 residues: Ribonuclease HII (216 aa).

The 189-residue stretch at 28–216 (DIVCGVDEAG…PVRAALDLIR (189 aa)) folds into the RNase H type-2 domain. Residues D34, E35, and D126 each contribute to the a divalent metal cation site.

This sequence belongs to the RNase HII family. It depends on Mn(2+) as a cofactor. Requires Mg(2+) as cofactor.

The protein localises to the cytoplasm. The catalysed reaction is Endonucleolytic cleavage to 5'-phosphomonoester.. Its function is as follows. Endonuclease that specifically degrades the RNA of RNA-DNA hybrids. The protein is Ribonuclease HII of Burkholderia vietnamiensis (strain G4 / LMG 22486) (Burkholderia cepacia (strain R1808)).